Here is a 69-residue protein sequence, read N- to C-terminus: Guanine nucleotide-binding protein G(I)/G(S)/G(O) subunit gamma-T2 (69 aa).

Residue Cys66 is modified to Cysteine methyl ester. The S-farnesyl cysteine moiety is linked to residue Cys66. A propeptide spans Val67–Ser69 (removed in mature form).

It belongs to the G protein gamma family. As to quaternary structure, g proteins are composed of 3 units, alpha, beta and gamma.

It localises to the cell membrane. In terms of biological role, guanine nucleotide-binding proteins (G proteins) are involved as a modulator or transducer in various transmembrane signaling systems. The beta and gamma chains are required for the GTPase activity, for replacement of GDP by GTP, and for G protein-effector interaction. This chain is Guanine nucleotide-binding protein G(I)/G(S)/G(O) subunit gamma-T2 (Gngt2), found in Mus musculus (Mouse).